Reading from the N-terminus, the 199-residue chain is LIM domain-containing protein WLIM2b (199 aa).

LIM zinc-binding domains follow at residues 8–68 (QKCK…LFKE) and 106–166 (EKCA…LFKE).

As to quaternary structure, interacts with F-actin. Expressed in roots, leaves, stems, flowers and siliques. Barely detected in pollen.

Its subcellular location is the cytoplasm. The protein localises to the cytoskeleton. In terms of biological role, binds to actin filaments and promotes cross-linking into thick bundles. Has an actin-stabilizing activity. The actin regulatory activities are not regulated by pH and [Ca(2+)]. The sequence is that of LIM domain-containing protein WLIM2b from Arabidopsis thaliana (Mouse-ear cress).